Here is a 217-residue protein sequence, read N- to C-terminus: Grancalcin (217 aa).

4 EF-hand domains span residues 48 to 83, 89 to 122, 119 to 154, and 155 to 180; these read SSAG…SGIN, FSLE…AALN, AALN…MGYR, and LSPQ…DYVA. The Ca(2+) site is built by Asp65, Asp69, and Glu71. The Ca(2+) site is built by Asp132, Asp134, Ser136, Thr138, and Glu143.

As to quaternary structure, homodimer. Interacts with SRI and LCP1. Detected in neutrophils and macrophages (at protein level). Highly expressed in bone marrow.

It is found in the cytoplasm. Its subcellular location is the cytoplasmic granule membrane. Its function is as follows. Calcium-binding protein that may play a role in the adhesion of neutrophils to fibronectin. May play a role in the formation of focal adhesions. In Homo sapiens (Human), this protein is Grancalcin (GCA).